The chain runs to 158 residues: MSETMQSLDQLSALKTTQPDAPTYTKKVDKFGRAYATGKRKDAVARVWIKPGAGKVIVNSREVEVYFARPVLRMMIQQPLVAAARAGQYDVICTVAGGGLSGQAGAVRHGISKALTNFEPELRGVLKKGGFLTRDSRVVERKKYGKAKARRSFQFSKR.

The protein belongs to the universal ribosomal protein uS9 family.

The polypeptide is Small ribosomal subunit protein uS9 (Rhodopseudomonas palustris (strain HaA2)).